A 558-amino-acid polypeptide reads, in one-letter code: Glutamine-dependent NAD(+) synthetase (558 aa).

A CN hydrolase domain is found at 2-262 (FTIALAQLNP…LALLSYDLSS (261 aa)). Glu42 serves as the catalytic Proton acceptor; for glutaminase activity. Residue Lys117 is the For glutaminase activity of the active site. An L-glutamine-binding site is contributed by Tyr123. The Nucleophile; for glutaminase activity role is filled by Cys153. Residues Ser190 and Lys196 each contribute to the L-glutamine site. The segment at 284-558 (ALVLGVGDYL…IAQAFHPQGS (275 aa)) is ligase. 304-311 (GLSGGIDS) provides a ligand contact to ATP. Residue Asn387 coordinates deamido-NAD(+). Thr411 serves as a coordination point for ATP. Positions 416 and 526 each coordinate deamido-NAD(+).

This sequence in the C-terminal section; belongs to the NAD synthetase family.

The enzyme catalyses deamido-NAD(+) + L-glutamine + ATP + H2O = L-glutamate + AMP + diphosphate + NAD(+) + H(+). The protein operates within cofactor biosynthesis; NAD(+) biosynthesis; NAD(+) from deamido-NAD(+) (L-Gln route): step 1/1. Its function is as follows. Catalyzes the ATP-dependent amidation of deamido-NAD to form NAD. Uses L-glutamine as a nitrogen source. The polypeptide is Glutamine-dependent NAD(+) synthetase (Synechocystis sp. (strain ATCC 27184 / PCC 6803 / Kazusa)).